We begin with the raw amino-acid sequence, 160 residues long: S-ribosylhomocysteine lyase (160 aa).

H57, H61, and C127 together coordinate Fe cation.

This sequence belongs to the LuxS family. As to quaternary structure, homodimer. Fe cation is required as a cofactor.

It catalyses the reaction S-(5-deoxy-D-ribos-5-yl)-L-homocysteine = (S)-4,5-dihydroxypentane-2,3-dione + L-homocysteine. Functionally, involved in the synthesis of autoinducer 2 (AI-2) which is secreted by bacteria and is used to communicate both the cell density and the metabolic potential of the environment. The regulation of gene expression in response to changes in cell density is called quorum sensing. Catalyzes the transformation of S-ribosylhomocysteine (RHC) to homocysteine (HC) and 4,5-dihydroxy-2,3-pentadione (DPD). The chain is S-ribosylhomocysteine lyase from Streptococcus suis (strain 98HAH33).